A 379-amino-acid polypeptide reads, in one-letter code: Transcription factor TIP2 (379 aa).

The disordered stretch occupies residues 144 to 184; it reads MVGPFESSPTPRSGGGRKRSRATAGFHGGGPANGVEKKEKQ. The segment at 173-186 is basic motif; degenerate; sequence GPANGVEKKEKQRR. The region spanning 173–222 is the bHLH domain; it reads GPANGVEKKEKQRRLRLTEKYNALMLLIPNRTKEDRATVISDAIEYIQEL. The helix-loop-helix motif stretch occupies residues 187–222; that stretch reads LRLTEKYNALMLLIPNRTKEDRATVISDAIEYIQEL.

Belongs to the bHLH protein family. As to quaternary structure, homodimer. Interacts with TDR, but not with EAT1. In terms of tissue distribution, highly expressed in anthers; strong expression in the middle layer and tapetum, and weak expression in the endothecium.

Its subcellular location is the nucleus. In terms of biological role, transcription factor that binds to the E-box-containing promoter regions of the transcription factors TDR and EAT1, activating their expression. May have a role in specifying the cell pattern of the inner anther walls and functioning in meiosis progression. Required for male reproduction. Acts downstream of UDT1 and GAMYB, but upstream of TDR1 and EAT1 in pollen development. The protein is Transcription factor TIP2 (TIP2) of Oryza sativa subsp. japonica (Rice).